The primary structure comprises 412 residues: Alanyl-tRNA editing protein Aarsd1 (412 aa).

Positions 108, 112, 208, and 212 each coordinate Zn(2+).

It belongs to the class-II aminoacyl-tRNA synthetase family. Alax-L subfamily. It depends on Zn(2+) as a cofactor.

It is found in the cytoplasm. Its function is as follows. Functions in trans to edit the amino acid moiety from incorrectly charged tRNA(Ala). This is Alanyl-tRNA editing protein Aarsd1 (aarsd1) from Danio rerio (Zebrafish).